The sequence spans 231 residues: Class II histocompatibility antigen, B-L beta chain (231 aa).

Residues 1-89 are beta-1; the sequence is FFQWSATVEC…IVAPLTLQRR (89 aa). Residues 1-194 are Extracellular-facing; that stretch reads FFQWSATVEC…PGDVSRSKLL (194 aa). 2 cysteine pairs are disulfide-bonded: Cys-10-Cys-74 and Cys-111-Cys-167. Asn-14 carries N-linked (GlcNAc...) asparagine glycosylation. Residues 90–182 form a beta-2 region; it reads EPKVRIFALQ…SLQQPITQRW (93 aa). Positions 91-179 constitute an Ig-like C1-type domain; the sequence is PKVRIFALQS…EHTSLQQPIT (89 aa). A connecting peptide region spans residues 183–194; that stretch reads EPPGDVSRSKLL. The helical transmembrane segment at 195–219 threads the bilayer; the sequence is MGVGGFVLGLVYLALGIFFFLCSKK. Residues 220-231 are Cytoplasmic-facing; that stretch reads GQPDPTSPGILN.

It belongs to the MHC class II family.

It is found in the membrane. This Gallus gallus (Chicken) protein is Class II histocompatibility antigen, B-L beta chain.